The following is a 329-amino-acid chain: MKVYYENDADLNLLKDKTVAIIGYGSQGHAHAQNLRDSGVKVVVGQRPGGANYELAKEHGFEPVSAAEAAAQADLIMILLPDQVQAEVYKNDIAPNLKSGDVLAFGHGFNIHFEQIAPPADVDVIMAAPKGPGHLVRRTYTEGGAVPAIIAVDQDASGKAFDIALAYAKGIGATRSGVLQTTFREETETDLFGEQAVLCGGLSELIKAGFETLVEAGYQPEIAYFECLHECKLIIDLIYEGGLAKMRDSISDTAEYGDLTRGPRVINDKSREEMKKILKEIQQGEFAREFIAENMTGKAHFSAMRRIGKEHQIEQVGGELRKMMSWLKK.

The region spanning M1 to T181 is the KARI N-terminal Rossmann domain. NADP(+) contacts are provided by residues Y24–Q27, R47, and D82–Q85. H107 is an active-site residue. G133 provides a ligand contact to NADP(+). The region spanning T182–L327 is the KARI C-terminal knotted domain. Mg(2+)-binding residues include D190, E194, E226, and E230. Residue S251 participates in substrate binding.

The protein belongs to the ketol-acid reductoisomerase family. Mg(2+) serves as cofactor.

It carries out the reaction (2R)-2,3-dihydroxy-3-methylbutanoate + NADP(+) = (2S)-2-acetolactate + NADPH + H(+). It catalyses the reaction (2R,3R)-2,3-dihydroxy-3-methylpentanoate + NADP(+) = (S)-2-ethyl-2-hydroxy-3-oxobutanoate + NADPH + H(+). The protein operates within amino-acid biosynthesis; L-isoleucine biosynthesis; L-isoleucine from 2-oxobutanoate: step 2/4. It participates in amino-acid biosynthesis; L-valine biosynthesis; L-valine from pyruvate: step 2/4. In terms of biological role, involved in the biosynthesis of branched-chain amino acids (BCAA). Catalyzes an alkyl-migration followed by a ketol-acid reduction of (S)-2-acetolactate (S2AL) to yield (R)-2,3-dihydroxy-isovalerate. In the isomerase reaction, S2AL is rearranged via a Mg-dependent methyl migration to produce 3-hydroxy-3-methyl-2-ketobutyrate (HMKB). In the reductase reaction, this 2-ketoacid undergoes a metal-dependent reduction by NADPH to yield (R)-2,3-dihydroxy-isovalerate. The chain is Ketol-acid reductoisomerase (NADP(+)) from Maridesulfovibrio salexigens (strain ATCC 14822 / DSM 2638 / NCIMB 8403 / VKM B-1763) (Desulfovibrio salexigens).